A 343-amino-acid chain; its full sequence is Tribbles homolog 2 (343 aa).

The disordered stretch occupies residues 25–50 (EELSSIRSAEPSQSFSPNLGSPSPPE). A compositionally biased stretch (polar residues) spans 29–45 (SIRSAEPSQSFSPNLGS). The Protein kinase domain maps to 61–308 (IGKYLLLEPL…SQEILDHPWF (248 aa)).

Belongs to the protein kinase superfamily. CAMK Ser/Thr protein kinase family. Tribbles subfamily. As to expression, expressed in granulosa cells of the dominant follicles of the ovary and down-regulated in ovulatory follicles.

The protein localises to the cytoplasm. The protein resides in the cytoskeleton. Interacts with MAPK kinases and regulates activation of MAP kinases. Does not display kinase activity. This Bos taurus (Bovine) protein is Tribbles homolog 2.